The sequence spans 148 residues: Small ribosomal subunit protein uS15 (148 aa).

The span at 1 to 14 shows a compositional bias: basic residues; that stretch reads MGRLHSHRHGKSHS. The disordered stretch occupies residues 1–27; it reads MGRLHSHRHGKSHSIRPSSPKAPSWIQ.

It belongs to the universal ribosomal protein uS15 family. Part of the 30S ribosomal subunit.

In Cenarchaeum symbiosum (strain A), this protein is Small ribosomal subunit protein uS15.